Reading from the N-terminus, the 279-residue chain is Large ribosomal subunit protein uL2 (279 aa).

Residues 223 to 279 (MAMNPVDHPMGGGEGKSKSGGGRKHPKSPWGQLAKGLKTRNKKKASSKLIVRGRKSK) are disordered. The segment covering 232-242 (MGGGEGKSKSG) has biased composition (gly residues). Residues 259-279 (LKTRNKKKASSKLIVRGRKSK) are compositionally biased toward basic residues.

Belongs to the universal ribosomal protein uL2 family. As to quaternary structure, part of the 50S ribosomal subunit. Forms a bridge to the 30S subunit in the 70S ribosome.

Its function is as follows. One of the primary rRNA binding proteins. Required for association of the 30S and 50S subunits to form the 70S ribosome, for tRNA binding and peptide bond formation. It has been suggested to have peptidyltransferase activity; this is somewhat controversial. Makes several contacts with the 16S rRNA in the 70S ribosome. This Prosthecochloris aestuarii (strain DSM 271 / SK 413) protein is Large ribosomal subunit protein uL2.